Consider the following 125-residue polypeptide: Small ribosomal subunit protein uS12 (125 aa).

Positions 1–28 (MPTISQLIGSERKRLTRKTKSPALKSCP) are disordered. Position 89 is a 3-methylthioaspartic acid (Asp89). Residues 104-125 (TAGVKDRRQSRSKYGAKAPKNN) form a disordered region.

Belongs to the universal ribosomal protein uS12 family. Part of the 30S ribosomal subunit. Contacts proteins S8 and S17. May interact with IF1 in the 30S initiation complex.

Its function is as follows. With S4 and S5 plays an important role in translational accuracy. Interacts with and stabilizes bases of the 16S rRNA that are involved in tRNA selection in the A site and with the mRNA backbone. Located at the interface of the 30S and 50S subunits, it traverses the body of the 30S subunit contacting proteins on the other side and probably holding the rRNA structure together. The combined cluster of proteins S8, S12 and S17 appears to hold together the shoulder and platform of the 30S subunit. The polypeptide is Small ribosomal subunit protein uS12 (Prochlorococcus marinus (strain MIT 9515)).